The following is a 294-amino-acid chain: Acetylglutamate kinase (294 aa).

Substrate is bound by residues 47-48, R69, and N168; that span reads GG.

This sequence belongs to the acetylglutamate kinase family. ArgB subfamily.

It localises to the cytoplasm. The catalysed reaction is N-acetyl-L-glutamate + ATP = N-acetyl-L-glutamyl 5-phosphate + ADP. Its pathway is amino-acid biosynthesis; L-arginine biosynthesis; N(2)-acetyl-L-ornithine from L-glutamate: step 2/4. In terms of biological role, catalyzes the ATP-dependent phosphorylation of N-acetyl-L-glutamate. This is Acetylglutamate kinase from Corynebacterium glutamicum (strain ATCC 13032 / DSM 20300 / JCM 1318 / BCRC 11384 / CCUG 27702 / LMG 3730 / NBRC 12168 / NCIMB 10025 / NRRL B-2784 / 534).